Reading from the N-terminus, the 105-residue chain is Large ribosomal subunit protein uL24 (105 aa).

Belongs to the universal ribosomal protein uL24 family. As to quaternary structure, part of the 50S ribosomal subunit.

Functionally, one of two assembly initiator proteins, it binds directly to the 5'-end of the 23S rRNA, where it nucleates assembly of the 50S subunit. In terms of biological role, one of the proteins that surrounds the polypeptide exit tunnel on the outside of the subunit. The protein is Large ribosomal subunit protein uL24 of Psychrobacter cryohalolentis (strain ATCC BAA-1226 / DSM 17306 / VKM B-2378 / K5).